Consider the following 740-residue polypeptide: NAD(P)H-quinone oxidoreductase subunit 5, chloroplastic (740 aa).

16 consecutive transmembrane segments (helical) span residues 9–29, 40–60, 89–109, 125–145, 147–167, 185–205, 221–241, 258–278, 283–303, 327–347, 354–374, 396–416, 425–445, 547–567, 606–626, and 718–738; these read WIIPFIPLPVPILLGGGLLLF, WSFLSIFLLSIVMIFSLYLSI, IDPLTCIMLILITTVGILVLI, FAYMGFFNTSMLGLVTSSNLI, IYFFWELVGMCSYLLIGFWFT, GDFGLLLGILGLYWVTGSFEF, VNLLFLTLCAFLLFMGPIAKS, TPISALIHAATMVAAGIFLVA, LFIVIPSIMYIISLIGIITIL, LGYMMLALGMGSYRSALFHLI, ALLFLGSGSIIHSMEAIVGYS, TAFLLGTLSLCGIPPLACFWS, LLFSPIFAIIACSTAGLTAFY, ILFPMLVLLLFTLFIGAIGIP, FSVSIAFFGIFIAYCLYKPFY, and ISSYLFLYLSYVFLFFLFLKI.

The protein belongs to the complex I subunit 5 family. In terms of assembly, NDH is composed of at least 16 different subunits, 5 of which are encoded in the nucleus.

The protein resides in the plastid. Its subcellular location is the chloroplast thylakoid membrane. The catalysed reaction is a plastoquinone + NADH + (n+1) H(+)(in) = a plastoquinol + NAD(+) + n H(+)(out). It carries out the reaction a plastoquinone + NADPH + (n+1) H(+)(in) = a plastoquinol + NADP(+) + n H(+)(out). In terms of biological role, NDH shuttles electrons from NAD(P)H:plastoquinone, via FMN and iron-sulfur (Fe-S) centers, to quinones in the photosynthetic chain and possibly in a chloroplast respiratory chain. The immediate electron acceptor for the enzyme in this species is believed to be plastoquinone. Couples the redox reaction to proton translocation, and thus conserves the redox energy in a proton gradient. The polypeptide is NAD(P)H-quinone oxidoreductase subunit 5, chloroplastic (ndhF) (Aethionema cordifolium (Lebanon stonecress)).